A 227-amino-acid polypeptide reads, in one-letter code: Inner membrane lipoprotein SadB (227 aa).

The first 21 residues, 1–21 (MHKNGKFIPLLALGFTFFLSG), serve as a signal peptide directing secretion. Cys22 is lipidated: N-palmitoyl cysteine. A lipid anchor (S-diacylglycerol cysteine) is attached at Cys22. The stretch at 31 to 68 (VEEMKEQQKEQETKINLLEKQQKEQEAKINLLEKQQAT) forms a coiled coil.

In terms of assembly, homotrimer.

The protein resides in the cell inner membrane. Required for proper surface expression of the autotransporter adhesin SadA. Could be directly involved in the biogenesis of functionally active SadA. The chain is Inner membrane lipoprotein SadB from Salmonella typhimurium (strain LT2 / SGSC1412 / ATCC 700720).